The sequence spans 328 residues: HTH-type transcriptional regulator MalR (328 aa).

In terms of domain architecture, HTH lacI-type spans 2 to 57; the sequence is PVTIKDVAKAAGVSPSTVTRVIQNKSTISDETKKRVRKAMKELNYHPNLNARSLVS. Positions 5-24 form a DNA-binding region, H-T-H motif; the sequence is IKDVAKAAGVSPSTVTRVIQ. The segment at 173–218 is inducer binding; it reads TEYFIKKGCKRIAFIGGSKKLFVTKDRLTGYEQALKHYKLTTDNNR. A dimerization region spans residues 282–291; sequence NLAAYVDINS.

Transcriptional repressor of the maltosaccharide utilization operons malxCD and malMP. The sequence is that of HTH-type transcriptional regulator MalR (malR) from Streptococcus pneumoniae serotype 4 (strain ATCC BAA-334 / TIGR4).